The chain runs to 164 residues: Lipoprotein signal peptidase (164 aa).

Transmembrane regions (helical) follow at residues 11–31 (YWVLALAAIVLDQWSKWAVLS), 41–61 (VIPSFFDLTLVYNPGAAFSFL), 64–84 (QGGWQKYFFLVLAVAVSAYLV), and 92–112 (FATLGKTGAAMIIGGALGNVI). Catalysis depends on residues aspartate 122 and aspartate 140. Residues 132–152 (FYPAFNIADSFICVGAVLAVL) form a helical membrane-spanning segment.

Belongs to the peptidase A8 family.

The protein resides in the cell inner membrane. The catalysed reaction is Release of signal peptides from bacterial membrane prolipoproteins. Hydrolyzes -Xaa-Yaa-Zaa-|-(S,diacylglyceryl)Cys-, in which Xaa is hydrophobic (preferably Leu), and Yaa (Ala or Ser) and Zaa (Gly or Ala) have small, neutral side chains.. The protein operates within protein modification; lipoprotein biosynthesis (signal peptide cleavage). Its function is as follows. This protein specifically catalyzes the removal of signal peptides from prolipoproteins. The chain is Lipoprotein signal peptidase from Neisseria meningitidis serogroup C (strain 053442).